The chain runs to 243 residues: Uridylate kinase (243 aa).

Position 18 to 21 (18 to 21 (KLGG)) interacts with ATP. Glycine 59 serves as a coordination point for UMP. The ATP site is built by glycine 60 and arginine 64. UMP is bound by residues aspartate 79 and 140–147 (MGMPYFST). Residues tyrosine 173 and aspartate 176 each contribute to the ATP site.

It belongs to the UMP kinase family. Homohexamer.

Its subcellular location is the cytoplasm. It carries out the reaction UMP + ATP = UDP + ADP. It participates in pyrimidine metabolism; CTP biosynthesis via de novo pathway; UDP from UMP (UMPK route): step 1/1. Its activity is regulated as follows. Inhibited by UTP. Its function is as follows. Catalyzes the reversible phosphorylation of UMP to UDP. This chain is Uridylate kinase, found in Corynebacterium glutamicum (strain R).